The following is a 112-amino-acid chain: Conotoxin vil14.4 (112 aa).

An N-terminal signal peptide occupies residues 1 to 22 (MGFRVLVLVVMATTSALPFTFF). Positions 23 to 85 (EEPGRSPFRP…FAELSVGQRR (63 aa)) are excised as a propeptide. Disulfide bonds link cysteine 91-cysteine 111 and cysteine 95-cysteine 107.

Belongs to the conotoxin R superfamily. In terms of tissue distribution, expressed by the venom duct.

The protein localises to the secreted. The protein is Conotoxin vil14.4 of Conus villepinii (Villepin's cone).